Consider the following 229-residue polypeptide: Biosynthetic peptidoglycan transglycosylase (229 aa).

A helical membrane pass occupies residues Asn-11–Tyr-31.

This sequence belongs to the glycosyltransferase 51 family.

It localises to the cell inner membrane. The enzyme catalyses [GlcNAc-(1-&gt;4)-Mur2Ac(oyl-L-Ala-gamma-D-Glu-L-Lys-D-Ala-D-Ala)](n)-di-trans,octa-cis-undecaprenyl diphosphate + beta-D-GlcNAc-(1-&gt;4)-Mur2Ac(oyl-L-Ala-gamma-D-Glu-L-Lys-D-Ala-D-Ala)-di-trans,octa-cis-undecaprenyl diphosphate = [GlcNAc-(1-&gt;4)-Mur2Ac(oyl-L-Ala-gamma-D-Glu-L-Lys-D-Ala-D-Ala)](n+1)-di-trans,octa-cis-undecaprenyl diphosphate + di-trans,octa-cis-undecaprenyl diphosphate + H(+). Its pathway is cell wall biogenesis; peptidoglycan biosynthesis. Its function is as follows. Peptidoglycan polymerase that catalyzes glycan chain elongation from lipid-linked precursors. This Caulobacter vibrioides (strain ATCC 19089 / CIP 103742 / CB 15) (Caulobacter crescentus) protein is Biosynthetic peptidoglycan transglycosylase.